The following is a 991-amino-acid chain: UvrABC system protein A (991 aa).

Position 48 to 55 (48 to 55 (GLSGSGKS)) interacts with ATP. ABC transporter domains lie at 345–624 (WAKS…PKSL) and 644–972 (NHRR…KFLE). 676-683 (GVSGGGKS) contributes to the ATP binding site. Residues 775–801 (CEACQGDGVIKIEMHFLPDVYVTCDVC) form a C4-type zinc finger.

Belongs to the ABC transporter superfamily. UvrA family. Forms a heterotetramer with UvrB during the search for lesions.

Its subcellular location is the cytoplasm. In terms of biological role, the UvrABC repair system catalyzes the recognition and processing of DNA lesions. UvrA is an ATPase and a DNA-binding protein. A damage recognition complex composed of 2 UvrA and 2 UvrB subunits scans DNA for abnormalities. When the presence of a lesion has been verified by UvrB, the UvrA molecules dissociate. This chain is UvrABC system protein A, found in Bradyrhizobium diazoefficiens (strain JCM 10833 / BCRC 13528 / IAM 13628 / NBRC 14792 / USDA 110).